The primary structure comprises 503 residues: Sarpagan bridge enzyme 1 (503 aa).

Residues 3-23 (ISVTTSIALATIVFFLYKLAT) form a helical; Signal-anchor for type II membrane protein membrane-spanning segment. Cys442 lines the heme pocket.

It belongs to the cytochrome P450 family. Requires heme as cofactor. Highly expressed in roots. Expressed at low levels in leaves, stems and flowers.

It is found in the endoplasmic reticulum membrane. It catalyses the reaction (19E)-geissoschizine + reduced [NADPH--hemoprotein reductase] + O2 = polyneuridine aldehyde + oxidized [NADPH--hemoprotein reductase] + 2 H2O + H(+). The enzyme catalyses tetrahydroalstonine + A + reduced [NADPH--hemoprotein reductase] + O2 = alstonine + AH2 + oxidized [NADPH--hemoprotein reductase] + 2 H2O + H(+). The catalysed reaction is ajmalicine + A + reduced [NADPH--hemoprotein reductase] + O2 = serpentine + AH2 + oxidized [NADPH--hemoprotein reductase] + 2 H2O + H(+). It functions in the pathway alkaloid biosynthesis; ajmaline biosynthesis. Monooxygenase involved in the biosynthesis of ajmaline-type monoterpenoid indole alkaloids (MIAs) natural products, important plant-derived pharmaceuticals used in the therapy of heart disorders. Converts by cyclization the strictosidine-derived geissoschizine to the sarpagan alkaloid polyneuridine aldehyde, precursor of vomilenine, an intermediate chemical in the biosynthesis of ajmaline. Converts by aromatization the tetrahydro-beta-carboline alkaloids tetrahydroalstonine and ajmalicine to the corresponding beta-carboline alkaloids alstonine and serpentine, respectively. This Rauvolfia serpentina (Serpentine wood) protein is Sarpagan bridge enzyme 1.